The chain runs to 158 residues: Transcription antitermination protein NusB (158 aa).

Residues 1–13 (MSEAGDTSPQPGK) are compositionally biased toward polar residues. Residues 1–24 (MSEAGDTSPQPGKTGQPKAGDRRR) are disordered.

Belongs to the NusB family.

In terms of biological role, involved in transcription antitermination. Required for transcription of ribosomal RNA (rRNA) genes. Binds specifically to the boxA antiterminator sequence of the ribosomal RNA (rrn) operons. This chain is Transcription antitermination protein NusB, found in Marinobacter nauticus (strain ATCC 700491 / DSM 11845 / VT8) (Marinobacter aquaeolei).